A 222-amino-acid polypeptide reads, in one-letter code: RNA-binding protein KhpB (222 aa).

The tract at residues 2–51 (DMVTVTAKTVEEAVTKALIELQTTSDKLTYEIVEKGSAGFLGIGSKPAII) is jag_N domain. Residues 54-133 (KRKETLQDKA…KSSSDYIRVK (80 aa)) form the KH domain. Residues 138 to 204 (NYRERRKETL…EEPFRHVIIS (67 aa)) form the R3H domain.

Belongs to the KhpB RNA-binding protein family. As to quaternary structure, forms a complex with KhpA. Homodimer or homotrimer.

It is found in the cytoplasm. Its function is as follows. A probable RNA chaperone. Forms a complex with KhpA which binds to cellular RNA and controls its expression. Plays a role in peptidoglycan (PG) homeostasis and cell length regulation. The sequence is that of RNA-binding protein KhpB from Clostridium symbiosum (Bacteroides symbiosus).